The sequence spans 815 residues: Ent-sandaracopimara-8(14),15-diene synthase, chloroplastic (815 aa).

The transit peptide at 1–38 directs the protein to the chloroplast; it reads MLPSSICSMGQIPRTSPHYYGMLPKQMSKGHPPMVTRA. D550, D554, N696, T700, and E704 together coordinate Mg(2+). The DDXXD motif signature appears at 550 to 554; it reads DDFFD.

This sequence belongs to the terpene synthase family. Mg(2+) serves as cofactor.

It localises to the plastid. It is found in the chloroplast. The enzyme catalyses ent-copalyl diphosphate = ent-sandaracopimara-8(14),15-diene + diphosphate. It carries out the reaction 9alpha-copalyl diphosphate = (12E)-9alpha-labda-8(17),12,14-triene + diphosphate. Functionally, involved in the biosynthesis of oryzalexin A-F phytoalexins. Catalyzes the conversion of ent-copalyl diphosphate to the phytoalexin precursor ent-sandaracopimaradiene. The sequence is that of Ent-sandaracopimara-8(14),15-diene synthase, chloroplastic from Oryza sativa subsp. japonica (Rice).